The primary structure comprises 238 residues: MRSARLGRLLWMLFITEIQAATELPEEKYILAEGETLNVNCPVTVGVYSNSRKAWQKLNRNGKFQTLAITERVSGQVSKVQVGKIFLTDEPSEGMLHVQMTNVQAEDSGLYRCVIYQPPKDPIILFYPVRLVVTNYSSGTPASAETPTQSCSPTTTLPPTTTTNRHRPRPRTVRTVTQFLTDFTTSLSSPGLKVTLTNVTDITRDTEISLILPAVCGLLSKSLVFIVLFVVTRMSFTP.

The first 20 residues, 1 to 20, serve as a signal peptide directing secretion; the sequence is MRSARLGRLLWMLFITEIQA. One can recognise an Ig-like V-type domain in the interval 21–129; it reads ATELPEEKYI…KDPIILFYPV (109 aa). The Extracellular portion of the chain corresponds to 21–210; sequence ATELPEEKYI…DITRDTEISL (190 aa). An intrachain disulfide couples C41 to C113. A glycan (N-linked (GlcNAc...) asparagine) is linked at N135. Residues 141–169 are disordered; the sequence is PASAETPTQSCSPTTTLPPTTTTNRHRPR. Residues 146–163 are compositionally biased toward low complexity; sequence TPTQSCSPTTTLPPTTTT. A glycan (N-linked (GlcNAc...) asparagine) is linked at N198. Residues 211–231 form a helical membrane-spanning segment; it reads ILPAVCGLLSKSLVFIVLFVV. The Cytoplasmic portion of the chain corresponds to 232 to 238; that stretch reads TRMSFTP.

In terms of assembly, monomer. Homomultimer; when activated. Interacts with TYROBP/DAP12. Interacts with TLR4.

Its subcellular location is the cell membrane. In terms of biological role, cell surface receptor that plays important roles in innate and adaptive immunity by amplifying inflammatory responses. Upon activation by various ligands such as PGLYRP1, HMGB1 or HSP70, multimerizes and forms a complex with transmembrane adapter TYROBP/DAP12. In turn, initiates a SYK-mediated cascade of tyrosine phosphorylation, activating multiple downstream mediators such as BTK, MAPK1, MAPK3 or phospholipase C-gamma. This cascade promotes the neutrophil- and macrophage-mediated release of pro-inflammatory cytokines and/or chemokines, as well as their migration and thereby amplifies inflammatory responses that are triggered by bacterial and fungal infections. By also promoting the amplification of inflammatory signals that are initially triggered by Toll-like receptor (TLR) and NOD-like receptor engagement, plays a major role in the pathophysiology of acute and chronic inflammatory diseases of different etiologies including septic shock and atherosclerosis. In Sus scrofa (Pig), this protein is Triggering receptor expressed on myeloid cells 1 (TREM1).